The following is a 465-amino-acid chain: Lactaldehyde dehydrogenase (465 aa).

Residue 220–225 coordinates NAD(+); it reads GSVEIG. Catalysis depends on residues glutamate 240 and cysteine 274.

It belongs to the aldehyde dehydrogenase family. As to quaternary structure, homotetramer.

It catalyses the reaction (S)-lactaldehyde + NAD(+) + H2O = (S)-lactate + NADH + 2 H(+). Its pathway is cofactor biosynthesis; coenzyme F420 biosynthesis. In terms of biological role, involved in F420 biosynthesis through the oxidation of lactaldehyde to lactate. The polypeptide is Lactaldehyde dehydrogenase (Methanococcus maripaludis (strain C7 / ATCC BAA-1331)).